Reading from the N-terminus, the 547-residue chain is CTP synthase (547 aa).

An amidoligase domain region spans residues 1 to 269; it reads MKTKFIFVTG…DQKVAIMLRL (269 aa). Residue serine 14 coordinates CTP. Serine 14 contacts UTP. ATP-binding positions include 15 to 20 and aspartate 72; that span reads SLGKGL. Residues aspartate 72 and glutamate 143 each contribute to the Mg(2+) site. Residues 150–152, 190–195, and lysine 226 each bind CTP; these read DIE and KTKPTQ. Residues 190–195 and lysine 226 contribute to the UTP site; that span reads KTKPTQ. The 254-residue stretch at 294–547 folds into the Glutamine amidotransferase type-1 domain; sequence TVAIVGKYVD…IGAAKKHAKV (254 aa). Glycine 356 lines the L-glutamine pocket. Catalysis depends on cysteine 383, which acts as the Nucleophile; for glutamine hydrolysis. L-glutamine is bound by residues 384-387, glutamate 407, and arginine 475; that span reads LGMQ. Active-site residues include histidine 520 and glutamate 522.

The protein belongs to the CTP synthase family. As to quaternary structure, homotetramer.

It carries out the reaction UTP + L-glutamine + ATP + H2O = CTP + L-glutamate + ADP + phosphate + 2 H(+). It catalyses the reaction L-glutamine + H2O = L-glutamate + NH4(+). The catalysed reaction is UTP + NH4(+) + ATP = CTP + ADP + phosphate + 2 H(+). Its pathway is pyrimidine metabolism; CTP biosynthesis via de novo pathway; CTP from UDP: step 2/2. Allosterically activated by GTP, when glutamine is the substrate; GTP has no effect on the reaction when ammonia is the substrate. The allosteric effector GTP functions by stabilizing the protein conformation that binds the tetrahedral intermediate(s) formed during glutamine hydrolysis. Inhibited by the product CTP, via allosteric rather than competitive inhibition. Its function is as follows. Catalyzes the ATP-dependent amination of UTP to CTP with either L-glutamine or ammonia as the source of nitrogen. Regulates intracellular CTP levels through interactions with the four ribonucleotide triphosphates. In Desulfovibrio desulfuricans (strain ATCC 27774 / DSM 6949 / MB), this protein is CTP synthase.